The sequence spans 68 residues: Large ribosomal subunit protein uL29 (68 aa).

It belongs to the universal ribosomal protein uL29 family.

In Bradyrhizobium diazoefficiens (strain JCM 10833 / BCRC 13528 / IAM 13628 / NBRC 14792 / USDA 110), this protein is Large ribosomal subunit protein uL29.